The primary structure comprises 96 residues: Small ribosomal subunit protein bS16 (96 aa).

The protein belongs to the bacterial ribosomal protein bS16 family.

This chain is Small ribosomal subunit protein bS16, found in Oenococcus oeni (strain ATCC BAA-331 / PSU-1).